The following is a 1378-amino-acid chain: DNA-directed RNA polymerase subunit beta (1378 aa).

The protein belongs to the RNA polymerase beta chain family. The RNAP catalytic core consists of 2 alpha, 1 beta, 1 beta' and 1 omega subunit. When a sigma factor is associated with the core the holoenzyme is formed, which can initiate transcription.

It catalyses the reaction RNA(n) + a ribonucleoside 5'-triphosphate = RNA(n+1) + diphosphate. Its function is as follows. DNA-dependent RNA polymerase catalyzes the transcription of DNA into RNA using the four ribonucleoside triphosphates as substrates. In Hyphomonas neptunium (strain ATCC 15444), this protein is DNA-directed RNA polymerase subunit beta.